Consider the following 504-residue polypeptide: Anaerobic nitric oxide reductase transcription regulator NorR (504 aa).

D57 bears the 4-aspartylphosphate mark. The 230-residue stretch at 187–416 folds into the Sigma-54 factor interaction domain; the sequence is MIGLSPGMTQ…LEHAIHRAVV (230 aa). ATP-binding positions include 215–222 and 278–287; these read GETGTGKE and ADNGTLFLDE. Residues 479-498 constitute a DNA-binding region (H-T-H motif); the sequence is WAACARMLETDVANLHRLAK.

It participates in nitrogen metabolism; nitric oxide reduction. Its function is as follows. Required for the expression of anaerobic nitric oxide (NO) reductase, acts as a transcriptional activator for at least the norVW operon. Activation also requires sigma-54. The polypeptide is Anaerobic nitric oxide reductase transcription regulator NorR (Escherichia coli (strain SE11)).